A 95-amino-acid chain; its full sequence is Putative membrane protein insertion efficiency factor (95 aa).

It belongs to the UPF0161 family.

The protein localises to the cell membrane. Functionally, could be involved in insertion of integral membrane proteins into the membrane. The protein is Putative membrane protein insertion efficiency factor of Lactobacillus delbrueckii subsp. bulgaricus (strain ATCC 11842 / DSM 20081 / BCRC 10696 / JCM 1002 / NBRC 13953 / NCIMB 11778 / NCTC 12712 / WDCM 00102 / Lb 14).